We begin with the raw amino-acid sequence, 589 residues long: Protein kinase G11A (589 aa).

The segment at 1–167 (MASKAMPRAP…SACSSISSVT (167 aa)) is disordered. 3 stretches are compositionally biased toward polar residues: residues 15–36 (NLQS…SPSK), 46–55 (AESSKPNSEV), and 63–76 (TQHQ…TGSN). Basic and acidic residues predominate over residues 91–100 (RLADEEKGVV). The segment covering 142–165 (SSSRCRPSTSSDVSDESACSSISS) has biased composition (low complexity). A Protein kinase domain is found at 195-533 (FKLLKKLGCG…ATEIKQHPFF (339 aa)). ATP-binding positions include 201–209 (LGCGDIGSV) and K224. The Proton acceptor role is filled by D320. Positions 551-589 (RPVEIERPPKQPVSTSEPAAAPSDAAQKSSDSYLEFDFF) are disordered.

Belongs to the protein kinase superfamily. Ser/Thr protein kinase family.

It catalyses the reaction L-seryl-[protein] + ATP = O-phospho-L-seryl-[protein] + ADP + H(+). It carries out the reaction L-threonyl-[protein] + ATP = O-phospho-L-threonyl-[protein] + ADP + H(+). Its function is as follows. May play a role in the regulation of metabolism and signal transduction processes. The polypeptide is Protein kinase G11A (Oryza sativa subsp. indica (Rice)).